A 283-amino-acid polypeptide reads, in one-letter code: Accumulation of dyads protein 2 (283 aa).

The interval 1–41 (MSDKEQTSGNTDLENAPAGYYSSHDNDVNGVAEDERPSHDS) is disordered. Residues 1–89 (MSDKEQTSGN…APAPVHKFAN (89 aa)) are Cytoplasmic-facing. Residues 90–110 (PAPLGLSAFALTTFVLSMFNA) traverse the membrane as a helical segment. Over 111 to 120 (RAQGITVPNV) the chain is Extracellular. The helical transmembrane segment at 121–141 (VVGCAMFYGGLVQLIAGIWEI) threads the bilayer. The Cytoplasmic portion of the chain corresponds to 142 to 151 (ALENTFGGTA). Residues 152 to 172 (LCSYGGFWLSFAAIYIPWFGI) form a helical membrane-spanning segment. Over 173–185 (LEAYEDNESDLNN) the chain is Extracellular. Residues 186 to 206 (ALGFYLLGWAIFTFGLTVCTM) traverse the membrane as a helical segment. Residues 207 to 208 (KS) are Cytoplasmic-facing. The helical transmembrane segment at 209–229 (TVMFFLLFFLLALTFLLLSIG) threads the bilayer. The Extracellular portion of the chain corresponds to 230–240 (HFANRLGVTRA). Residues 241–261 (GGVLGVVVAFIAWYNAYAGVA) traverse the membrane as a helical segment. Over 262–283 (TKQNSYVLARPFPLPSTERVIF) the chain is Cytoplasmic.

It belongs to the acetate uptake transporter (AceTr) (TC 2.A.96) family.

The protein resides in the cell membrane. It localises to the vacuole membrane. In terms of biological role, transporter protein required for ammonia export and acetate uptake and resistance. Necessary for up-regulation and down-regulation of meiotic plaque (MP) component levels in a dependency on external acetate. Has a role in ascus formation. This is Accumulation of dyads protein 2 (ADY2) from Saccharomyces cerevisiae (strain ATCC 204508 / S288c) (Baker's yeast).